Reading from the N-terminus, the 430-residue chain is Glutamate-1-semialdehyde 2,1-aminomutase (430 aa).

The residue at position 265 (lysine 265) is an N6-(pyridoxal phosphate)lysine.

The protein belongs to the class-III pyridoxal-phosphate-dependent aminotransferase family. HemL subfamily. In terms of assembly, homodimer. Pyridoxal 5'-phosphate serves as cofactor.

It is found in the cytoplasm. It carries out the reaction (S)-4-amino-5-oxopentanoate = 5-aminolevulinate. Its pathway is porphyrin-containing compound metabolism; protoporphyrin-IX biosynthesis; 5-aminolevulinate from L-glutamyl-tRNA(Glu): step 2/2. The chain is Glutamate-1-semialdehyde 2,1-aminomutase from Shewanella sp. (strain MR-4).